The chain runs to 174 residues: uncharacterized protein (174 aa).

The segment at 153-174 (RSGNHSAGNVHPASPMIKVQGG) is disordered.

This is an uncharacterized protein from Sinorhizobium fredii (strain NBRC 101917 / NGR234).